The primary structure comprises 392 residues: Putative cystathionine gamma-lyase (392 aa).

The span at 1-10 shows a compositional bias: polar residues; sequence MSDSATTDSA. The disordered stretch occupies residues 1–41; the sequence is MSDSATTDSAGTGGERSASAPGDGTRAVRAGLPEPVKHEPT. Lysine 216 carries the N6-(pyridoxal phosphate)lysine modification.

This sequence belongs to the trans-sulfuration enzymes family. Requires pyridoxal 5'-phosphate as cofactor.

Its subcellular location is the cytoplasm. The catalysed reaction is L,L-cystathionine + H2O = 2-oxobutanoate + L-cysteine + NH4(+). It participates in amino-acid biosynthesis; L-cysteine biosynthesis; L-cysteine from L-homocysteine and L-serine: step 2/2. This Streptomyces coelicolor (strain ATCC BAA-471 / A3(2) / M145) protein is Putative cystathionine gamma-lyase (cysA).